Here is a 364-residue protein sequence, read N- to C-terminus: PqqA peptide cyclase (364 aa).

The region spanning 6 to 222 is the Radical SAM core domain; it reads VGAPAGMLIE…HARTRYAGGP (217 aa). 3 residues coordinate [4Fe-4S] cluster: Cys-20, Cys-24, and Cys-27.

The protein belongs to the radical SAM superfamily. PqqE family. Interacts with PqqD. The interaction is necessary for activity of PqqE. It depends on [4Fe-4S] cluster as a cofactor.

It carries out the reaction [PQQ precursor protein] + S-adenosyl-L-methionine = E-Y cross-linked-[PQQ precursor protein] + 5'-deoxyadenosine + L-methionine + H(+). It functions in the pathway cofactor biosynthesis; pyrroloquinoline quinone biosynthesis. Its function is as follows. Catalyzes the cross-linking of a glutamate residue and a tyrosine residue in the PqqA protein as part of the biosynthesis of pyrroloquinoline quinone (PQQ). This is PqqA peptide cyclase from Streptomyces rochei (Streptomyces parvullus).